The following is a 193-amino-acid chain: MLSQLPRAAIRLLPRRQPNLHCYRYHSKPTSLTAQAGRVHRVLSAKADSNLTYDDLATCLGVTNTYAAQLLLGQAKLTPETAKKLRAALPAVSDDDLEDMQNSFPMRSYDDEILKEPHVYRTYEAITHYGEAMKAIINEQCGDGIMSAIDFYCDVGTSIGKHGEKRVVITFNGKFLPFIEQKAEDNGAMSPRD.

Active-site residues include Arg121, Glu124, and Ser147.

This sequence belongs to the cyanase family.

The catalysed reaction is cyanate + hydrogencarbonate + 3 H(+) = NH4(+) + 2 CO2. Its function is as follows. Catalyzes the reaction of cyanate with bicarbonate to produce ammonia and carbon dioxide. In Phaeodactylum tricornutum (strain CCAP 1055/1), this protein is Cyanate hydratase.